A 512-amino-acid chain; its full sequence is GMP synthase [glutamine-hydrolyzing] (512 aa).

The Glutamine amidotransferase type-1 domain occupies 7–197; the sequence is TIIVLDFGSQ…VFGVCGCSEG (191 aa). The active-site Nucleophile is C84. Catalysis depends on residues H171 and E173. In terms of domain architecture, GMPS ATP-PPase spans 198 to 387; that stretch reads WNMENFIEVE…LGIPDEIVWR (190 aa). An ATP-binding site is contributed by 225-231; it reads SGGVDSS.

In terms of assembly, homodimer.

It catalyses the reaction XMP + L-glutamine + ATP + H2O = GMP + L-glutamate + AMP + diphosphate + 2 H(+). It functions in the pathway purine metabolism; GMP biosynthesis; GMP from XMP (L-Gln route): step 1/1. Functionally, catalyzes the synthesis of GMP from XMP. The protein is GMP synthase [glutamine-hydrolyzing] of Bacillus cereus (strain G9842).